The following is a 266-amino-acid chain: Energy-coupling factor transporter ATP-binding protein EcfA1 (266 aa).

In terms of domain architecture, ABC transporter spans 2-237 (IKLNNVTFRY…EKIIEIAKIA (236 aa)). 37-44 (GHNGSGKS) lines the ATP pocket.

The protein belongs to the ABC transporter superfamily. Energy-coupling factor EcfA family. As to quaternary structure, forms a stable energy-coupling factor (ECF) transporter complex composed of 2 membrane-embedded substrate-binding proteins (S component), 2 ATP-binding proteins (A component) and 2 transmembrane proteins (T component).

The protein localises to the cell membrane. Its function is as follows. ATP-binding (A) component of a common energy-coupling factor (ECF) ABC-transporter complex. Unlike classic ABC transporters this ECF transporter provides the energy necessary to transport a number of different substrates. This chain is Energy-coupling factor transporter ATP-binding protein EcfA1, found in Mycoplasmopsis synoviae (strain 53) (Mycoplasma synoviae).